The chain runs to 116 residues: Toxin ICK-10 (116 aa).

The N-terminal stretch at 1 to 19 (MMKLYSLVIIATLAAAAFA) is a signal peptide. Intrachain disulfides connect C56–C71, C64–C77, C68–C113, and C70–C84.

This sequence belongs to the neurotoxin 25 family. ICK-8 subfamily. Expressed by the venom gland.

Its subcellular location is the secreted. Functionally, ion channel inhibitor. This Trittame loki (Brush-footed trapdoor spider) protein is Toxin ICK-10.